A 303-amino-acid chain; its full sequence is D-alanine--D-alanine ligase B (303 aa).

Positions 103–298 constitute an ATP-grasp domain; the sequence is KLLWKGAGLP…YEDLCLKVLD (196 aa). Residue 129–184 participates in ATP binding; it reads ERQLGLPIFVKPSTEGSSIGVTKVKQPGELRAAFEEARKYDKVVIAEQFIGGGEYT. Positions 252, 265, and 267 each coordinate Mg(2+).

The protein belongs to the D-alanine--D-alanine ligase family. Requires Mg(2+) as cofactor. Mn(2+) serves as cofactor.

The protein localises to the cytoplasm. The catalysed reaction is 2 D-alanine + ATP = D-alanyl-D-alanine + ADP + phosphate + H(+). Its pathway is cell wall biogenesis; peptidoglycan biosynthesis. Functionally, cell wall formation. This is D-alanine--D-alanine ligase B from Chromobacterium violaceum (strain ATCC 12472 / DSM 30191 / JCM 1249 / CCUG 213 / NBRC 12614 / NCIMB 9131 / NCTC 9757 / MK).